A 296-amino-acid chain; its full sequence is Cytidine deaminase (296 aa).

2 CMP/dCMP-type deaminase domains span residues 47–167 (TEAE…FGPK) and 186–296 (DSAD…IDPV). A substrate-binding site is contributed by 88–90 (NLE). A Zn(2+)-binding site is contributed by H101. Residue E103 is the Proton donor of the active site. Zn(2+) contacts are provided by C128 and C131.

Belongs to the cytidine and deoxycytidylate deaminase family. As to quaternary structure, homodimer. Zn(2+) is required as a cofactor.

It catalyses the reaction cytidine + H2O + H(+) = uridine + NH4(+). The catalysed reaction is 2'-deoxycytidine + H2O + H(+) = 2'-deoxyuridine + NH4(+). Functionally, this enzyme scavenges exogenous and endogenous cytidine and 2'-deoxycytidine for UMP synthesis. The chain is Cytidine deaminase from Shewanella baltica (strain OS155 / ATCC BAA-1091).